The primary structure comprises 555 residues: Hdr-like menaquinol oxidoreductase iron-sulfur subunit 2 (555 aa).

2 consecutive 4Fe-4S ferredoxin-type domains span residues Arg-82–Lys-111 and Lys-151–Val-180. Cys-91, Cys-94, Cys-97, Cys-101, Cys-160, Cys-163, Cys-166, and Cys-170 together coordinate [4Fe-4S] cluster.

Consists of five subunits: an integral membrane subunit, a cytochrome b-like subunit, a cytochrome c subunit and two iron-sulfur subunits. [4Fe-4S] cluster serves as cofactor.

It is found in the cell membrane. In terms of biological role, has menaquinol-oxidizing activity. HmeC and HmeD subunits may together mediate electron transfer from menaquinol to an unidentified electron acceptor on the cytoplasmic side of the membrane. The protein is Hdr-like menaquinol oxidoreductase iron-sulfur subunit 2 (hmeD) of Archaeoglobus fulgidus (strain ATCC 49558 / DSM 4304 / JCM 9628 / NBRC 100126 / VC-16).